The following is a 321-amino-acid chain: Peroxidase 42 (321 aa).

An N-terminal signal peptide occupies residues 1-29 (MATSSGSCLIISLLVVVVAAALSASTASA). Pyrrolidone carboxylic acid is present on Gln-30. Cystine bridges form between Cys-40/Cys-118, Cys-73/Cys-78, Cys-124/Cys-315, and Cys-202/Cys-227. The Proton acceptor role is filled by His-71. Residues Asp-72, Ile-75, Gly-77, Asp-79, and Ser-81 each contribute to the Ca(2+) site. Residues Asn-85 and Asn-96 are each glycosylated (N-linked (GlcNAc...) asparagine). Position 165 (Pro-165) interacts with substrate. Residue His-195 coordinates heme b. Thr-196 is a Ca(2+) binding site. Residue Asn-211 is glycosylated (N-linked (GlcNAc...) asparagine). Ca(2+)-binding residues include Asp-239, Thr-242, and Gly-247. Residue Asn-270 is glycosylated (N-linked (GlcNAc...) asparagine).

Belongs to the peroxidase family. Classical plant (class III) peroxidase subfamily. Heme b is required as a cofactor. Ca(2+) serves as cofactor.

The protein localises to the secreted. The enzyme catalyses 2 a phenolic donor + H2O2 = 2 a phenolic radical donor + 2 H2O. Its function is as follows. Removal of H(2)O(2), oxidation of toxic reductants, biosynthesis and degradation of lignin, suberization, auxin catabolism, response to environmental stresses such as wounding, pathogen attack and oxidative stress. These functions might be dependent on each isozyme/isoform in each plant tissue. The chain is Peroxidase 42 (PER42) from Zea mays (Maize).